Consider the following 555-residue polypeptide: MNRFITSILVVFISMSGWLQGADTGSISGILGMRDFQSRFADRYNPISNSYSYSAWRQALLTGTINAGCLFGAMLSSPFTERIGKKYSICFFSGVYIIAELLLVTAVPSWIQVLVGKILAGVGIGALSVLSPGYQSEVAPPQIRGAVVATYQIFSTGAALVAACINMGTHKLRKTASWRTSFGINMLWGILLMVGVLFLPESPRYLIYKGRDEEALRIMCNMAELSPESEIIQTNFNTIKSDIEIEMAGGKARWIEIFGKDIRYRTCLGFLVMLFRELIGNNYYFYYATQVFKGTGMTDIFLPAVILGAINFGTTFGALYTIDNLGRRNPLIFGAAFQSICFFIYAAVGDRKLIYKNGTSDHRAGSVMIVFSCLFLFSYCCSWGPMGWVIVGETFPIRYRSKCASVATSGNWLGNFMISFFTPFINNAIGFKLGYIYACINLFSSFMIFFLAKETKGLTLEEVNDLYMSNIKPWESYKYVREIESHRIHFSKEEEKREREKSKGIRGQEEEFIENADEDNNDSSSSSGSVVSAVKPRRSAVSNDRFSEDSHPTYI.

At M1 to L9 the chain is on the cytoplasmic side. Residues V10 to I30 traverse the membrane as a helical segment. The Extracellular portion of the chain corresponds to L31–Q58. The helical transmembrane segment at A59–F79 threads the bilayer. Over T80 to Y87 the chain is Cytoplasmic. Residues S88 to P108 traverse the membrane as a helical segment. Topologically, residues S109–Q112 are extracellular. Residues V113–G133 traverse the membrane as a helical segment. Residues Y134 to R144 are Cytoplasmic-facing. The chain crosses the membrane as a helical span at residues G145–I165. The Extracellular portion of the chain corresponds to N166–R179. Residues T180 to P200 traverse the membrane as a helical segment. At E201–T266 the chain is on the cytoplasmic side. A helical membrane pass occupies residues C267–F285. Residues Y286–F301 are Extracellular-facing. Residues L302–I322 form a helical membrane-spanning segment. At D323–R328 the chain is on the cytoplasmic side. The chain crosses the membrane as a helical span at residues N329–G349. Over D350–R363 the chain is Extracellular. A glycan (N-linked (GlcNAc...) asparagine) is linked at N357. The helical transmembrane segment at A364–G384 threads the bilayer. The Cytoplasmic segment spans residues P385–A404. The chain crosses the membrane as a helical span at residues S405–I425. Over N426–K432 the chain is Extracellular. The chain crosses the membrane as a helical span at residues L433 to K453. Residues E454–I555 lie on the Cytoplasmic side of the membrane. The segment covering K492–E509 has biased composition (basic and acidic residues). The disordered stretch occupies residues K492–I555. Residues E510 to N521 show a composition bias toward acidic residues. Residues D522–V534 are compositionally biased toward low complexity. Over residues R545–I555 the composition is skewed to basic and acidic residues.

The protein belongs to the major facilitator superfamily. Sugar transporter (TC 2.A.1.1) family.

It localises to the membrane. In terms of biological role, high-affinity gluconate transporter. The chain is High-affinity gluconate transporter ght3 (ght3) from Schizosaccharomyces pombe (strain 972 / ATCC 24843) (Fission yeast).